Consider the following 595-residue polypeptide: Elongation factor 4 (595 aa).

One can recognise a tr-type G domain in the interval Ser2 to Thr184. GTP-binding positions include Asp14–Thr19 and Asn131–Asp134.

This sequence belongs to the TRAFAC class translation factor GTPase superfamily. Classic translation factor GTPase family. LepA subfamily.

The protein resides in the cell inner membrane. The enzyme catalyses GTP + H2O = GDP + phosphate + H(+). Functionally, required for accurate and efficient protein synthesis under certain stress conditions. May act as a fidelity factor of the translation reaction, by catalyzing a one-codon backward translocation of tRNAs on improperly translocated ribosomes. Back-translocation proceeds from a post-translocation (POST) complex to a pre-translocation (PRE) complex, thus giving elongation factor G a second chance to translocate the tRNAs correctly. Binds to ribosomes in a GTP-dependent manner. This Pseudomonas syringae pv. tomato (strain ATCC BAA-871 / DC3000) protein is Elongation factor 4.